Reading from the N-terminus, the 400-residue chain is Subtilisin-like protease 2 (400 aa).

A signal peptide spans 1-20; sequence MKFSQSLIALAACFLPLIAA. Residues 21 to 119 constitute a propeptide that is removed on maturation; sequence APEEAQHAKI…IERDGKVQAN (99 aa). Positions 42–117 constitute an Inhibitor I9 domain; it reads SYIVVFNKGV…AWIERDGKVQ (76 aa). Asparagine 82 carries an N-linked (GlcNAc...) asparagine glycan. Residues 128–400 form the Peptidase S8 domain; sequence TWGLGRISHK…NLIAYNGNGA (273 aa). Active-site charge relay system residues include aspartate 160, histidine 192, and serine 345.

This sequence belongs to the peptidase S8 family.

The protein resides in the secreted. Potently inhibited by the serine peptidase inhibitor chymostatin. Also inhibited by antpain and PMSF. Functionally, major secreted subtilisin-like serine endopeptidase. Preferentially cleaves substrates containing hydrophobic residues at P4, positively charged residues at P3, small or flexible residues at P2, and large, bulky residues at P1. Mediates the degradation of collagen, the major structural protein in the mammalian host. Degrades the nonhelical regions of collagen that function in the cross-linking of the helical components. May function as virulence factor involved in epidermal wing necrosis observed in white nose syndrome (WNS) in bats. This is Subtilisin-like protease 2 from Pseudogymnoascus destructans (strain ATCC MYA-4855 / 20631-21) (Bat white-nose syndrome fungus).